Consider the following 177-residue polypeptide: Inner membrane-spanning protein YciB (177 aa).

5 helical membrane-spanning segments follow: residues 22-42 (IFIASKSLIFISGLTCLLYWI), 50-70 (INLFSFITIAIFGSLTIIFHN), 76-96 (WKITIIYMIFSVILFISQFFM), 121-141 (FFWALFFLFCSILNIYVALCL), and 151-171 (VFGLSFLMFLSILITSIYINF).

The protein belongs to the YciB family.

Its subcellular location is the cell inner membrane. In terms of biological role, plays a role in cell envelope biogenesis, maintenance of cell envelope integrity and membrane homeostasis. This chain is Inner membrane-spanning protein YciB, found in Buchnera aphidicola subsp. Schizaphis graminum (strain Sg).